Here is a 258-residue protein sequence, read N- to C-terminus: Snake venom serine protease 5 (258 aa).

An N-terminal signal peptide occupies residues Met-1 to Ala-18. Residues Gln-19–Leu-24 constitute a propeptide that is removed on maturation. In terms of domain architecture, Peptidase S1 spans Val-25–Ala-249. 6 disulfide bridges follow: Cys-31/Cys-163, Cys-50/Cys-66, Cys-98/Cys-256, Cys-142/Cys-210, Cys-174/Cys-189, and Cys-200/Cys-225. A glycan (N-linked (GlcNAc...) asparagine) is linked at Asn-44. His-65 acts as the Charge relay system in catalysis. Asn-103 is a glycosylation site (N-linked (GlcNAc...) asparagine). Asp-110 serves as the catalytic Charge relay system. Residues Asn-121, Asn-122, Asn-154, and Asn-170 are each glycosylated (N-linked (GlcNAc...) asparagine). Residue Ser-204 is the Charge relay system of the active site. Asn-251 carries an N-linked (GlcNAc...) asparagine glycan.

It belongs to the peptidase S1 family. Snake venom subfamily. As to quaternary structure, monomer. In terms of tissue distribution, expressed by the venom gland.

The protein localises to the secreted. Functionally, snake venom serine protease that may act in the hemostasis system of the prey. In Trimeresurus stejnegeri (Chinese green tree viper), this protein is Snake venom serine protease 5.